The sequence spans 507 residues: Probable lipid II flippase MurJ (507 aa).

13 helical membrane passes run 3–23 (LFRS…FGLV), 54–74 (IFAE…KMLI), 92–112 (LTLI…ILCI), 132–152 (ITIP…ILNS), 156–176 (FAAF…FTLI), 185–205 (ISIS…MFIC), 268–288 (IYQF…LPEM), 310–330 (IGLL…HPIT), 351–371 (ISAF…TPIF), 379–399 (TPLK…LLLM), 405–425 (IGIA…LYSY), 438–458 (IKLF…IIAL), and 472–492 (LLIK…IFFG).

The protein belongs to the MurJ/MviN family.

The protein localises to the cell inner membrane. Its pathway is cell wall biogenesis; peptidoglycan biosynthesis. In terms of biological role, involved in peptidoglycan biosynthesis. Transports lipid-linked peptidoglycan precursors from the inner to the outer leaflet of the cytoplasmic membrane. The polypeptide is Probable lipid II flippase MurJ (Rickettsia prowazekii (strain Madrid E)).